Reading from the N-terminus, the 435-residue chain is Trigger factor (435 aa).

One can recognise a PPIase FKBP-type domain in the interval 163–248 (GDYVTFDFKG…IKEIKVKELP (86 aa)).

The protein belongs to the FKBP-type PPIase family. Tig subfamily.

The protein resides in the cytoplasm. It catalyses the reaction [protein]-peptidylproline (omega=180) = [protein]-peptidylproline (omega=0). In terms of biological role, involved in protein export. Acts as a chaperone by maintaining the newly synthesized protein in an open conformation. Functions as a peptidyl-prolyl cis-trans isomerase. The chain is Trigger factor from Geotalea daltonii (strain DSM 22248 / JCM 15807 / FRC-32) (Geobacter daltonii).